Consider the following 529-residue polypeptide: E3 ubiquitin-protein ligase arih1 (529 aa).

Disordered regions lie at residues 1-30 (MDSD…EDDL) and 49-68 (GICG…GEEE). The segment covering 51 to 64 (CGEGGGSALGPGPG) has biased composition (gly residues). Residues 77 to 125 (TAEQILQHMVECIREVNEVIQNPATITRILLSHFNWDKEKLMERYFDGN) are UBA-like. Residues 154-365 (QDMPCQICYL…SAWYNCNRYN (212 aa)) are TRIAD supradomain. Zn(2+) contacts are provided by Cys158, Cys161, Cys175, His177, Cys180, Cys183, Cys203, Cys208, Cys248, Cys253, Cys269, Cys271, Cys276, Cys279, His284, Cys289, Cys316, and Cys319. An RING-type 1 zinc finger spans residues 158–208 (CQICYLNYPNSYFTGLECGHKFCMQCWSEYLTTKIIEEGMGQTISCPAHGC). The segment at 228–289 (LKYQHLITNS…GENWHDPVKC (62 aa)) adopts an IBR-type zinc-finger fold. Residues 316-347 (CPKCHVTIEKDGGCNHMVCRNQNCKAEFCWVC) form an RING-type 2; atypical zinc finger. The active site involves Cys329. Zn(2+)-binding residues include Cys334, Cys339, Cys344, Cys347, His354, and Cys361. The segment at 380-529 (RAALQRYLFY…EKDLWEYIED (150 aa)) is ariadne domain.

This sequence belongs to the RBR family. Ariadne subfamily. As to quaternary structure, interacts (via the first RING-type zinc finger) with ube2l3. Associates with cullin-RING ubiquitin ligase (CRL) complexes containing neddylated cullin.

It localises to the cytoplasm. It is found in the nucleus. It carries out the reaction [E2 ubiquitin-conjugating enzyme]-S-ubiquitinyl-L-cysteine + [acceptor protein]-L-lysine = [E2 ubiquitin-conjugating enzyme]-L-cysteine + [acceptor protein]-N(6)-ubiquitinyl-L-lysine.. Its pathway is protein modification; protein ubiquitination. Autoinhibited by the ariadne domain, which masks the second RING-type zinc finger that contains the active site and inhibits the E3 activity. Inhibition is relieved upon binding to neddylated cullin-RING ubiquitin ligase complexes, which activate the E3 ligase activity of ARIH1. Functionally, E3 ubiquitin-protein ligase, which catalyzes ubiquitination of target proteins together with ubiquitin-conjugating enzyme E2 ube2l3. Acts as an atypical E3 ubiquitin-protein ligase by working together with cullin-RING ubiquitin ligase (CRL) complexes and initiating ubiquitination of CRL substrates: associates with CRL complexes and specifically mediates addition of the first ubiquitin on CRLs targets. The initial ubiquitin is then elongated. E3 ubiquitin-protein ligase activity is activated upon binding to neddylated cullin-RING ubiquitin ligase complexes. This Xenopus tropicalis (Western clawed frog) protein is E3 ubiquitin-protein ligase arih1 (arih1).